The chain runs to 184 residues: Elongation factor P (184 aa).

The protein belongs to the elongation factor P family.

It is found in the cytoplasm. It participates in protein biosynthesis; polypeptide chain elongation. Its function is as follows. Involved in peptide bond synthesis. Stimulates efficient translation and peptide-bond synthesis on native or reconstituted 70S ribosomes in vitro. Probably functions indirectly by altering the affinity of the ribosome for aminoacyl-tRNA, thus increasing their reactivity as acceptors for peptidyl transferase. This is Elongation factor P from Leptothrix cholodnii (strain ATCC 51168 / LMG 8142 / SP-6) (Leptothrix discophora (strain SP-6)).